A 211-amino-acid chain; its full sequence is RING finger protein 222 (211 aa).

An RING-type zinc finger spans residues 14 to 65; sequence CPVCYEKFRDLDGASRTLSCGHVFCHDCLVKYLLSTRVDGQVQRTIVCPICR. Residues 187-207 traverse the membrane as a helical segment; sequence LITLIAVVAVVAAILPWVLLV.

Its subcellular location is the membrane. The chain is RING finger protein 222 (Rnf222) from Mus musculus (Mouse).